The following is a 977-amino-acid chain: Phosphatidylethanolamine N-methyltransferase (977 aa).

Polar residues predominate over residues 1 to 10; it reads MDQGLSTGAH. Residues 1–23 are disordered; the sequence is MDQGLSTGAHQDTDGLRERNTRV. At 1–83 the chain is on the lumenal side; that stretch reads MDQGLSTGAH…LPSEPKNFGD (83 aa). The span at 11-22 shows a compositional bias: basic and acidic residues; sequence QDTDGLRERNTR. Residues 84–104 traverse the membrane as a helical segment; it reads LVVLILLAGHIMFLWALPAGA. The Cytoplasmic portion of the chain corresponds to 105–107; sequence KIP. A helical transmembrane segment spans residues 108–128; it reads IFAVTYLFWRLAYNAGIGWLL. Residues 129 to 193 lie on the Lumenal side of the membrane; it reads HNQSHHKTLI…EYNTWLVFRR (65 aa). Residues 194–214 traverse the membrane as a helical segment; sequence LVDLILMCDFTSYCLFAIACG. Residues 215 to 221 lie on the Cytoplasmic side of the membrane; it reads HQPVDES. Residues 222-242 traverse the membrane as a helical segment; the sequence is ILMTVLRWSAGIVLVLFNLWV. The Lumenal segment spans residues 243–275; it reads KLDAHRVVKDYAWYWGDFFYLIDQELTFDGVFE. The helical transmembrane segment at 276–296 threads the bilayer; the sequence is MAPHPMYSVGYAGYYGISLMA. The Cytoplasmic segment spans residues 297 to 298; the sequence is AS. Residues 299-319 traverse the membrane as a helical segment; that stretch reads YKVLFISIIAHAAQFAFLVLV. Residues 320 to 397 lie on the Lumenal side of the membrane; sequence ENPHIDKTYN…LDLYRTTDSS (78 aa). Positions 328–370 are disordered; the sequence is YNPPPPRKRSSTCADSSSTLPTDLDTPTAPTPSEDQTPNATYS. Low complexity predominate over residues 341 to 360; that stretch reads ADSSSTLPTDLDTPTAPTPS. Over residues 361–370 the composition is skewed to polar residues; sequence EDQTPNATYS. The chain crosses the membrane as a helical span at residues 398–418; the sequence is IMLVQLLVFSITALTPSTPWY. Position 419 (Gln-419) is a topological domain, cytoplasmic. Residues 420–440 form a helical membrane-spanning segment; the sequence is LLFVVLAAISRIWYSVGIGYI. Topologically, residues 441 to 469 are lumenal; that stretch reads LRNQSNTKSWTRHFVKYGDTPQEAWNQWK. A helical transmembrane segment spans residues 470 to 492; that stretch reads GTYHLSMILCYSSFIAAVWKMYT. Residues 493 to 506 lie on the Cytoplasmic side of the membrane; it reads FPADWGYGLVLFRH. Residues 507 to 527 traverse the membrane as a helical segment; that stretch reads VLGAGLISLQIWTSVSIYESL. At 528–575 the chain is on the lumenal side; that stretch reads GEFGWFYGDFFFDDSPKLTYNGIYRFLNNPERVLGLAGVWGAVLITSS. The chain crosses the membrane as a helical span at residues 576-596; it reads GAVTFLALLSHILSLAFIQFV. Residues 597–977 are Cytoplasmic-facing; that stretch reads ERPHMQKLYG…TTTPLEESKE (381 aa).

This sequence belongs to the class VI-like SAM-binding methyltransferase superfamily. CHO2 family.

It is found in the endoplasmic reticulum membrane. The catalysed reaction is a 1,2-diacyl-sn-glycero-3-phosphoethanolamine + S-adenosyl-L-methionine = a 1,2-diacyl-sn-glycero-3-phospho-N-methylethanolamine + S-adenosyl-L-homocysteine + H(+). It participates in phospholipid metabolism; phosphatidylcholine biosynthesis. In terms of biological role, catalyzes the first step of the methylation pathway of phosphatidylcholine biosynthesis, the SAM-dependent methylation of phosphatidylethanolamine (PE) to phosphatidylmonomethylethanolamine (PMME). In Penicillium rubens (strain ATCC 28089 / DSM 1075 / NRRL 1951 / Wisconsin 54-1255) (Penicillium chrysogenum), this protein is Phosphatidylethanolamine N-methyltransferase (cho2).